The following is a 151-amino-acid chain: MFDFPQPGEIYRSAGFPDVAVVGILEDGIPWEMPYRCPDIVWNPYRRKFSILVRILADGRTTDIPLGRFLREFTCDRPDLFKRSPVNRHAVLKEMAGDPELQKWREKYLDIYPQDTVPVSRAAPVAREWREIPRTEPDPETTPDNSYRNYL.

The interval 130–151 (REIPRTEPDPETTPDNSYRNYL) is disordered.

This is an uncharacterized protein from Enterobacteria phage P4 (Bacteriophage P4).